We begin with the raw amino-acid sequence, 1088 residues long: DNA damage-binding protein 1a (1088 aa).

The protein belongs to the DDB1 family. Component of the CDD complex, at least composed of COP10, DET1 and DDB1A. Component of the CUL4-RBX1-CDD complex. Component of the CUL4-RBX1-DDB1-PRL1 E3 ubiquitin-protein ligase complex. Component of the UV-DDB complex, which is composed of DDB1A and DDB2. Interacts with RAE1. Interacts with WDR55. Interacts with ATCSA-1. Interacts with DDA1. Binds to ASG2; the subcellular localization of this complex depends on ASG2 farnesylation status. Binds to KTN80.2/DWA3. Interacts with HTD1. Interacts directly with DHU1.

The protein resides in the cytoplasm. Its subcellular location is the nucleus. The protein operates within protein modification; protein ubiquitination. In terms of biological role, component of light signal transduction machinery. Involved in repression of photomorphogenesis in darkness by participating in the CDD complex, a complex probably required to regulate the activity of ubiquitin conjugating enzymes (E2s). Repression of photomorphogenesis is probably mediated by ubiquitination and subsequent degradation of photomorphogenesis-promoting factors such as HY5, HYH and LAF1. Plays a role in DNA repair by forming with DDB2 the UV-damaged DNA-binding protein complex (UV-DDB). Component of the CUL4-RBX1-DDB1-PRL1 E3 ubiquitin-protein ligase complex. The polypeptide is DNA damage-binding protein 1a (Arabidopsis thaliana (Mouse-ear cress)).